Consider the following 180-residue polypeptide: uncharacterized protein (180 aa).

This is an uncharacterized protein from Dictyostelium discoideum (Social amoeba).